The sequence spans 376 residues: 1-deoxy-D-xylulose 5-phosphate reductoisomerase (376 aa).

Residues threonine 12, glycine 13, serine 14, isoleucine 15, asparagine 39, and asparagine 116 each coordinate NADPH. Lysine 117 is a binding site for 1-deoxy-D-xylulose 5-phosphate. Glutamate 118 contributes to the NADPH binding site. Residue aspartate 142 participates in Mn(2+) binding. The 1-deoxy-D-xylulose 5-phosphate site is built by serine 143, glutamate 144, serine 164, and histidine 187. Glutamate 144 lines the Mn(2+) pocket. Glycine 193 is a binding site for NADPH. 1-deoxy-D-xylulose 5-phosphate is bound by residues serine 200, asparagine 205, lysine 206, and glutamate 209. Residue glutamate 209 coordinates Mn(2+).

This sequence belongs to the DXR family. Mg(2+) serves as cofactor. Mn(2+) is required as a cofactor.

It catalyses the reaction 2-C-methyl-D-erythritol 4-phosphate + NADP(+) = 1-deoxy-D-xylulose 5-phosphate + NADPH + H(+). Its pathway is isoprenoid biosynthesis; isopentenyl diphosphate biosynthesis via DXP pathway; isopentenyl diphosphate from 1-deoxy-D-xylulose 5-phosphate: step 1/6. In terms of biological role, catalyzes the NADPH-dependent rearrangement and reduction of 1-deoxy-D-xylulose-5-phosphate (DXP) to 2-C-methyl-D-erythritol 4-phosphate (MEP). This chain is 1-deoxy-D-xylulose 5-phosphate reductoisomerase, found in Thermotoga maritima (strain ATCC 43589 / DSM 3109 / JCM 10099 / NBRC 100826 / MSB8).